The chain runs to 582 residues: Vesicular glutamate transporter 2 (582 aa).

The Cytoplasmic segment spans residues 1–71 (MESVKQRILA…CTCFGLPRRY (71 aa)). A helical membrane pass occupies residues 72–92 (IIAIMSGLGFCISFGIRCNLG). The Vesicular segment spans residues 93–125 (VAIVDMVNNSTIHRGGKVIKEKAKFNWDPETVG). N-linked (GlcNAc...) asparagine glycans are attached at residues N100 and N101. The helical transmembrane segment at 126 to 146 (MIHGSFFWGYIITQIPGGYIA) threads the bilayer. The Cytoplasmic portion of the chain corresponds to 147–148 (SR). Residues 149 to 169 (LAANRVFGAAILLTSTLNMLI) form a helical membrane-spanning segment. The Vesicular segment spans residues 170–177 (PSAARVHY). A helical transmembrane segment spans residues 178-198 (GCVIFVRILQGLVEGVTYPAC). Residues 199–216 (HGIWSKWAPPLERSRLAT) lie on the Cytoplasmic side of the membrane. A helical membrane pass occupies residues 217 to 237 (TSFCGSYAGAVIAMPLAGILV). At 238-244 (QYTGWSS) the chain is on the vesicular side. The helical transmembrane segment at 245-265 (VFYVYGSFGMVWYMFWLLVSY) threads the bilayer. The Cytoplasmic segment spans residues 266–310 (ESPAKHPTITDEERRYIEESIGESANLLGAMEKFKTPWRKFFTSM). The helical transmembrane segment at 311–331 (PVYAIIVANFCRSWTFYLLLI) threads the bilayer. Residues 332–349 (SQPAYFEEVFGFEISKVG) lie on the Vesicular side of the membrane. A helical transmembrane segment spans residues 350–370 (MLSAVPHLVMTIIVPIGGQIA). Over 371 to 386 (DFLRSKQILSTTTVRK) the chain is Cytoplasmic. Residues 387–407 (IMNCGGFGMEATLLLVVGYSH) traverse the membrane as a helical segment. The Vesicular segment spans residues 408–409 (TR). The chain crosses the membrane as a helical span at residues 410-430 (GVAISFLVLAVGFSGFAISGF). The Cytoplasmic portion of the chain corresponds to 431–443 (NVNHLDIAPRYAS). The chain crosses the membrane as a helical span at residues 444–464 (ILMGISDGVGTLSGMVCPIIV). The Vesicular segment spans residues 465 to 477 (GAMTKNKSREEWQ). The N-linked (GlcNAc...) asparagine glycan is linked to N470. Residues 478–498 (YVFLIAALVHYGGVIFYALFA) traverse the membrane as a helical segment. The Cytoplasmic segment spans residues 499–582 (SGEKQPWADP…YTYKDRDDYS (84 aa)).

The protein belongs to the major facilitator superfamily. Sodium/anion cotransporter family. VGLUT subfamily. In terms of tissue distribution, expressed in brain. Expressed in hippocampal neurons (at protein level).

Its subcellular location is the cytoplasmic vesicle. It is found in the secretory vesicle. The protein resides in the synaptic vesicle membrane. It localises to the synapse. The protein localises to the synaptosome. Its subcellular location is the cell membrane. It catalyses the reaction L-glutamate(out) = L-glutamate(in). The catalysed reaction is K(+)(in) + H(+)(out) = K(+)(out) + H(+)(in). The enzyme catalyses 3 Na(+)(out) + phosphate(out) = 3 Na(+)(in) + phosphate(in). It carries out the reaction phosphate(in) = phosphate(out). It catalyses the reaction chloride(in) = chloride(out). Chloride channel activity is allosterically activated by lumenal H(+) and Cl(-) leading to synaptic vesicles acidification. The L-glutamate transport activity is allosterically activated by lumenal H(+) and Cl(-). The allosteric requirement for H(+) efficiently prevents non-vesicular efflux across the plasma membrane. The L-glutamate uniporter activity exhibits a biphasic dependence on chloride concentration. Multifunctional transporter that transports L-glutamate as well as multiple ions such as chloride, proton, potassium, sodium and phosphate. At the synaptic vesicle membrane, mainly functions as a uniporter which transports preferentially L-glutamate but also, phosphate from the cytoplasm into synaptic vesicles at presynaptic nerve terminals of excitatory neural cells. The L-glutamate or phosphate uniporter activity is electrogenic and is driven by the proton electrochemical gradient, mainly by the electrical gradient established by the vacuolar H(+)-ATPase across the synaptic vesicle membrane. In addition, functions as a chloride channel that allows a chloride permeation through the synaptic vesicle membrane therefore affects the proton electrochemical gradient and promotes synaptic vesicles acidification. Moreover, functions as a vesicular K(+)/H(+) antiport allowing to maintain the electrical gradient and to decrease chemical gradient and therefore sustain vesicular glutamate uptake. The vesicular H(+)/H(+) antiport activity is electroneutral. At the plasma membrane, following exocytosis, functions as a symporter of Na(+) and phosphate from the extracellular space to the cytoplasm allowing synaptic phosphate homeostasis regulation. The symporter activity is driven by an inside negative membrane potential and is electrogenic. Also involved in the regulation of retinal hyaloid vessel regression during postnatal development. May also play a role in the endocrine glutamatergic system of other tissues such as pineal gland and pancreas. This chain is Vesicular glutamate transporter 2, found in Mus musculus (Mouse).